Consider the following 521-residue polypeptide: MGNSLPVESKFTFEEENDRIKYVVSSMQGWGEKMEDAHAAILNLDDATSTSFFGVYDGHGGAEVALYCAKQFHIELCNHEDYHNDLINALDNVFLSMDENLQQSDAWRELVIPHDNGCMYFLKAGVCAKPFPQATYTGPAYEGSTACVVVIRGNQMIVGHVGDSRCVLSRQGGLAIDLSFDHKPCTRTESERERVQNAGGRSLGLRCEQVMGNYVVKEQWVLGDFGGGVTISRSIGDFAFKKNKDLDREKQMLVCDPDILADDITDDMEFLVIASQGLWSCVDSADVVSYIHDRLSVEGAELRVICEEVVEFGLASGENTTVILVQFKPGAFQYQLVDPAGFGTAVSNIASTSAAPAGASDTSDEGVMADSCATADTSGSARAESGELVPTPSANNTVTDEVDPTGTVAADDKVDPNSSANADADDGAPKPSLGAVIESDEVALDATATGHQVAVRQQEEFDPKKCWICGKGYKKILLEPSSARARNPLLAHAKTCESEDKKAKKKITKYMMKANVTNQYH.

Positions Lys-21–Phe-327 constitute a PPM-type phosphatase domain. The Mn(2+) site is built by Asp-57, Gly-58, Gln-276, and Glu-318. The tract at residues Ala-354–Pro-431 is disordered.

Belongs to the PP2C family. Mg(2+) is required as a cofactor. The cofactor is Mn(2+).

The catalysed reaction is O-phospho-L-seryl-[protein] + H2O = L-seryl-[protein] + phosphate. It catalyses the reaction O-phospho-L-threonyl-[protein] + H2O = L-threonyl-[protein] + phosphate. The chain is Probable protein phosphatase 2C 16 from Oryza sativa subsp. japonica (Rice).